Here is a 221-residue protein sequence, read N- to C-terminus: Pre-hexon-linking protein VIII (221 aa).

Phosphothreonine; by host is present on Thr-65. Residues 113–150 (AAPWSGVKTGSFCGRGLQLAEPPTTAIYPSGLFHLGRG) constitute a propeptide that is removed on maturation.

The protein belongs to the adenoviridae hexon-linking protein family. Interacts with the peripentonal hexons as well as the hexons in the facets. Part of a complex composed of the core-capsid bridging protein, the endosome lysis protein VI and the hexon-linking protein VIII; these interactions bridge the virus core to the capsid. Cleaved by the viral protease during virion maturation. May cause the middle segment to be shed from the capsid.

The protein localises to the virion. The protein resides in the host nucleus. Functionally, structural component of the virion that acts as a cement protein on the capsid interior and which glue the peripentonal hexons and group-of-nine hexons together. This chain is Pre-hexon-linking protein VIII, found in Sus scrofa (Pig).